We begin with the raw amino-acid sequence, 430 residues long: UDP-glucose 6-dehydrogenase AglM (430 aa).

Residue Cys269 is part of the active site.

This sequence belongs to the UDP-glucose/GDP-mannose dehydrogenase family.

The catalysed reaction is UDP-alpha-D-glucose + 2 NAD(+) + H2O = UDP-alpha-D-glucuronate + 2 NADH + 3 H(+). It participates in nucleotide-sugar biosynthesis; UDP-alpha-D-glucuronate biosynthesis; UDP-alpha-D-glucuronate from UDP-alpha-D-glucose: step 1/1. It functions in the pathway cell surface structure biogenesis; S-layer biogenesis. With respect to regulation, activity improves as salinity decreases. Its function is as follows. Involved in the assembly of a N-linked pentasaccharide that decorates the S-layer glycoprotein and flagellins. Involved in the biosynthesis of the hexuronic acids found at both positions 2 and 3 of the pentasaccharide. This is UDP-glucose 6-dehydrogenase AglM (aglM) from Haloferax volcanii (strain ATCC 29605 / DSM 3757 / JCM 8879 / NBRC 14742 / NCIMB 2012 / VKM B-1768 / DS2) (Halobacterium volcanii).